Reading from the N-terminus, the 432-residue chain is Glutamate-1-semialdehyde 2,1-aminomutase (432 aa).

At lysine 272 the chain carries N6-(pyridoxal phosphate)lysine.

Belongs to the class-III pyridoxal-phosphate-dependent aminotransferase family. HemL subfamily. In terms of assembly, homodimer. Pyridoxal 5'-phosphate serves as cofactor.

Its subcellular location is the cytoplasm. The enzyme catalyses (S)-4-amino-5-oxopentanoate = 5-aminolevulinate. It participates in porphyrin-containing compound metabolism; protoporphyrin-IX biosynthesis; 5-aminolevulinate from L-glutamyl-tRNA(Glu): step 2/2. The protein operates within porphyrin-containing compound metabolism; chlorophyll biosynthesis. The chain is Glutamate-1-semialdehyde 2,1-aminomutase from Nostoc sp. (strain PCC 7120 / SAG 25.82 / UTEX 2576).